The sequence spans 638 residues: MAGGSATTWGYPVALLLLVATLGLGRWLQPDPGLPGLRHSYDCGIKGMQLLVFPRPGQTLRFKVVDEFGNRFDVNNCSICYHWVTSRPQEPAVFSADYRGCHVLEKDGRFHLRVFMEAVLPNGRVDVAQDATLICPKPDPSRTLDSQLAPPAMFSVSTPQTLSFLPTSGHTSQGSGHAFPSPLDPGHSSVHPTPALPSPGPGPTLATLAQPHWGTLEHWDVNKRDYIGTHLSQEQCQVASGHLPCIVRRTSKEACQQAGCCYDNTREVPCYYGNTATVQCFRDGYFVLVVSQEMALTHRITLANIHLAYAPTSCSPTQHTEAFVVFYFPLTHCGTTMQVAGDQLIYENWLVSGIHIQKGPQGSITRDSTFQLHVRCVFNASDFLPIQASIFPPPSPAPMTQPGPLRLELRIAKDETFSSYYGEDDYPIVRLLREPVHVEVRLLQRTDPNLVLLLHQCWGAPSANPFQQPQWPILSDGCPFKGDSYRTQMVALDGATPFQSHYQRFTVATFALLDSGSQRALRGLVYLFCSTSACHTSGLETCSTACSTGTTRQRRSSGHRNDTARPQDIVSSPGPVGFEDSYGQEPTLGPTDSNGNSSLRPLLWAVLLLPAVALVLGFGVFVGLSQTWAQKLWESNRQ.

A signal peptide spans 1–25; the sequence is MAGGSATTWGYPVALLLLVATLGLG. The Extracellular portion of the chain corresponds to 26–601; that stretch reads RWLQPDPGLP…DSNGNSSLRP (576 aa). An N-linked (GlcNAc...) asparagine glycan is attached at N76. The segment covering 165–175 has biased composition (polar residues); that stretch reads LPTSGHTSQGS. Positions 165 to 208 are disordered; that stretch reads LPTSGHTSQGSGHAFPSPLDPGHSSVHPTPALPSPGPGPTLATL. Positions 234-274 constitute a P-type domain; sequence EQCQVASGHLPCIVRRTSKEACQQAGCCYDNTREVPCYYGN. Cystine bridges form between C236-C261, C245-C260, and C255-C270. The 275-residue stretch at 279 to 553 folds into the ZP domain; the sequence is QCFRDGYFVL…TACSTGTTRQ (275 aa). N-linked (GlcNAc...) asparagine glycosylation occurs at N379. C457 and C478 are disulfide-bonded. Positions 549–594 are disordered; sequence GTTRQRRSSGHRNDTARPQDIVSSPGPVGFEDSYGQEPTLGPTDSN. Positions 554 to 638 are cleaved as a propeptide — removed in mature form; the sequence is RRSSGHRNDT…AQKLWESNRQ (85 aa). N561 and N596 each carry an N-linked (GlcNAc...) asparagine glycan. Residues 602–622 traverse the membrane as a helical segment; sequence LLWAVLLLPAVALVLGFGVFV. Residues 623–638 lie on the Cytoplasmic side of the membrane; that stretch reads GLSQTWAQKLWESNRQ.

Belongs to the ZP domain family. ZPB subfamily. As to quaternary structure, polymers of ZP2 and ZP3 organized into long filaments cross-linked by ZP1 homodimers. Interacts with ZP3. Proteolytically cleaved before the transmembrane segment to yield the secreted ectodomain incorporated in the zona pellucida. In terms of processing, O-glycosylated. As to expression, expressed in oocytes (at protein level).

It is found in the zona pellucida. The protein resides in the cell membrane. Component of the zona pellucida, an extracellular matrix surrounding oocytes which mediates sperm binding, induction of the acrosome reaction and prevents post-fertilization polyspermy. The zona pellucida is composed of 3 to 4 glycoproteins, ZP1, ZP2, ZP3, and ZP4. ZP1 ensures the structural integrity of the zona pellucida. In Homo sapiens (Human), this protein is Zona pellucida sperm-binding protein 1 (ZP1).